Reading from the N-terminus, the 264-residue chain is Type 1 encapsulin shell protein (264 aa).

The protein belongs to the encapsulin family. Family 1 subfamily. As to quaternary structure, forms hollow shells composed of 60 subunits. Monomers probably form pentamers which assemble into the shell. There are 12 pores where the pentamers meet as well as 3-fold axis channels and dimer channels; none are larger than 3-4 Angstroms in diameter. The N-terminus of the protein is inside the shell, the C-terminus is outside.

The protein localises to the encapsulin nanocompartment. Shell component of a type 1 encapsulin nanocompartment. Assembles into proteinaceous shells 21-24 nm in diameter. Empty organelles can be expressed in E.coli. Cargo proteins (DypB) are targeted to the interior via their C-terminal extensions. This is Type 1 encapsulin shell protein from Rhodococcus erythropolis (strain PR4 / NBRC 100887).